The sequence spans 141 residues: Ubiquitin-like protein ATG12 (141 aa).

The disordered stretch occupies residues 1 to 53 (MSEDSEVVLQLPSAPVGAGGESLPELSPETATPEPPSSAAVSPGTEEPPGDTK). Over residues 23 to 40 (LPELSPETATPEPPSSAA) the composition is skewed to low complexity. A Glycyl lysine isopeptide (Gly-Lys) (interchain with K-? in acceptor protein) cross-link involves residue Gly-141.

The protein belongs to the ATG12 family. As to quaternary structure, forms a conjugate with ATG5. Part of the minor complex composed of 4 sets of ATG12-ATG5 and ATG16L1 (400 kDa); this complex interacts with ATG3 leading to disruption of ATG7 interaction and promotion of ATG8-like proteins lipidation. Forms an 800-kDa complex composed of ATG12-ATG5 and ATG16L2. Interacts with DHX58/RIG-1, IFIH1/MDA5 and MAVS/IPS-1 in monomeric form as well as in ATG12-ATG5 conjugate. The interaction with MAVS is further enhanced upon vesicular stomatitis virus (VSV) infection. Interacts with ATG3; this interaction is essential for phosphatidylethanolamine (PE)-conjugated ATG8-like proteins formation. Interacts with ATG7. Interacts with ATG10. The ATG12-ATG5 conjugate interacts with RAB33A; this interaction is bridged by ATG16L1 and promotes ATG12-ATG5-ATG16L1 complex recruitment to phagophores. Interacts with TECPR1. Interacts with SH3BGRL. The ATG12-ATG5 conjugate interacts with PDCD6IP (via the BRO1 domain); this interaction is bridged by ATG12 and promotes multiple PDCD6IP-mediated functions such as endolysosomal trafficking, macroautophagy and exosome biogenesis. In terms of processing, acetylated by EP300. As to expression, ubiquitous.

The protein resides in the cytoplasm. It localises to the preautophagosomal structure membrane. In terms of biological role, ubiquitin-like protein involved in autophagy vesicles formation. Conjugation with ATG5 through a ubiquitin-like conjugating system involving also ATG7 as an E1-like activating enzyme and ATG10 as an E2-like conjugating enzyme, is essential for its function. The ATG12-ATG5 conjugate acts as an E3-like enzyme which is required for lipidation of ATG8 family proteins and their association to the vesicle membranes. As part of the ATG8 conjugation system with ATG5 and ATG16L1, required for recruitment of LRRK2 to stressed lysosomes and induction of LRRK2 kinase activity in response to lysosomal stress. Functionally, (Microbial infection) May act as a proviral factor. In association with ATG5, negatively regulates the innate antiviral immune response by impairing the type I IFN production pathway upon vesicular stomatitis virus (VSV) infection. The protein is Ubiquitin-like protein ATG12 of Mus musculus (Mouse).